We begin with the raw amino-acid sequence, 315 residues long: Cobalamin biosynthesis protein CobD (315 aa).

The next 5 membrane-spanning stretches (helical) occupy residues 54-74 (GLLF…ILFL), 78-98 (IAYW…LAMT), 152-172 (ADGV…LALM), 203-223 (IANF…SFIL), and 295-315 (LLYT…LLLF).

This sequence belongs to the CobD/CbiB family.

The protein resides in the cell membrane. It functions in the pathway cofactor biosynthesis; adenosylcobalamin biosynthesis. Its function is as follows. Converts cobyric acid to cobinamide by the addition of aminopropanol on the F carboxylic group. The polypeptide is Cobalamin biosynthesis protein CobD (Listeria monocytogenes serotype 4b (strain F2365)).